The following is a 1133-amino-acid chain: Probable cation-transporting ATPase 9 (1133 aa).

Residues 1 to 6 (MRVSSI) are Cytoplasmic-facing. A helical transmembrane segment spans residues 7 to 28 (EAEMENPIDVDKTDVEGELKIK). The Extracellular segment spans residues 29–34 (QVTLLR). The chain crosses the membrane as a helical span at residues 35–53 (ENIVKKIVFFLVAIFCSDR). Residues 54–167 (PSVLKKVFYE…IEINVPSFLT (114 aa)) lie on the Cytoplasmic side of the membrane. Residues 168–190 (LMWREFKKPINFLLYFGIIVWGI) traverse the membrane as a helical segment. Over 191–193 (EQM) the chain is Extracellular. A helical membrane pass occupies residues 194–212 (YVSTAITVVFTTTINSLIC). Residues 213-363 (IYIRGVMQKL…PFNKKFQQQA (151 aa)) are Cytoplasmic-facing. The helical transmembrane segment at 364–383 (VKLTILMATLLLIGFLSTLS) threads the bilayer. Topologically, residues 384–396 (RLLDIELPPLFIA) are extracellular. The helical transmembrane segment at 397–418 (FRFLDILIYSAPPGMPMLIAIT) threads the bilayer. Over 419 to 887 (NFVGLKRLKN…NSVEIFKGYL (469 aa)) the chain is Cytoplasmic. The 4-aspartylphosphate intermediate role is filled by Asp451. Mg(2+) contacts are provided by Asp827 and Asp831. A helical transmembrane segment spans residues 888–906 (QVALLRYLGFLTLAYFYSS). At 907-915 (YSSGQMDWQ) the chain is on the extracellular side. The chain crosses the membrane as a helical span at residues 916–931 (ALASGYFLVYLILGCN). The Cytoplasmic portion of the chain corresponds to 932–948 (TPLKKLEKSVFDDNLFS). Residues 949–972 (IYNVTSVLFGFTLHILSIVGCVES) form a helical membrane-spanning segment. Residues 973 to 994 (LHASPIYKEVNSLDAENNFQFE) are Extracellular-facing. The helical transmembrane segment at 995–1018 (TQHNTVLNFNILINFFYVIISNHI) threads the bilayer. The Cytoplasmic portion of the chain corresponds to 1019 to 1030 (GKPMKDRYYKNT). A helical membrane pass occupies residues 1031 to 1050 (IAIYYDLGLIYTCKCMILQV). The Extracellular portion of the chain corresponds to 1051-1101 (LLILEHTHHGLIFLILLLDQEFSSSLTVQVYFSLPMNLFLPEEFSLNFTQE). A helical membrane pass occupies residues 1102-1124 (VKKEKELLICNSSSTILEVDYNL). At 1125-1133 (RLNYFQQNF) the chain is on the cytoplasmic side.

The protein belongs to the cation transport ATPase (P-type) (TC 3.A.3) family. Type V subfamily.

Its subcellular location is the membrane. It carries out the reaction ATP + H2O = ADP + phosphate + H(+). This chain is Probable cation-transporting ATPase 9 (TPA9), found in Tetrahymena thermophila.